A 382-amino-acid chain; its full sequence is Lipid-A-disaccharide synthase (382 aa).

The protein belongs to the LpxB family.

It catalyses the reaction 2-N,3-O-bis[(3R)-3-hydroxytetradecanoyl]-alpha-D-glucosaminyl 1-phosphate + UDP-2-N,3-O-bis[(3R)-3-hydroxytetradecanoyl]-alpha-D-glucosamine = lipid A disaccharide (E. coli) + UDP + H(+). The catalysed reaction is a lipid X + a UDP-2-N,3-O-bis[(3R)-3-hydroxyacyl]-alpha-D-glucosamine = a lipid A disaccharide + UDP + H(+). It functions in the pathway glycolipid biosynthesis; lipid IV(A) biosynthesis; lipid IV(A) from (3R)-3-hydroxytetradecanoyl-[acyl-carrier-protein] and UDP-N-acetyl-alpha-D-glucosamine: step 5/6. Condensation of UDP-2,3-diacylglucosamine and 2,3-diacylglucosamine-1-phosphate to form lipid A disaccharide, a precursor of lipid A, a phosphorylated glycolipid that anchors the lipopolysaccharide to the outer membrane of the cell. The polypeptide is Lipid-A-disaccharide synthase (Escherichia coli O127:H6 (strain E2348/69 / EPEC)).